The chain runs to 345 residues: NADH-quinone oxidoreductase subunit H (345 aa).

8 helical membrane passes run 13–33, 84–104, 115–135, 161–181, 190–210, 248–268, 277–297, and 309–329; these read VLIL…LLFL, FMLA…VIPF, VAIL…IMGG, LGLI…GGIV, FFSW…ISCL, YIAI…GWLS, VFWM…VKAI, and LGWK…AFAA.

The protein belongs to the complex I subunit 1 family. NDH-1 is composed of 14 different subunits. Subunits NuoA, H, J, K, L, M, N constitute the membrane sector of the complex.

It is found in the cell inner membrane. It catalyses the reaction a quinone + NADH + 5 H(+)(in) = a quinol + NAD(+) + 4 H(+)(out). In terms of biological role, NDH-1 shuttles electrons from NADH, via FMN and iron-sulfur (Fe-S) centers, to quinones in the respiratory chain. The immediate electron acceptor for the enzyme in this species is believed to be ubiquinone. Couples the redox reaction to proton translocation (for every two electrons transferred, four hydrogen ions are translocated across the cytoplasmic membrane), and thus conserves the redox energy in a proton gradient. This subunit may bind ubiquinone. In Roseobacter denitrificans (strain ATCC 33942 / OCh 114) (Erythrobacter sp. (strain OCh 114)), this protein is NADH-quinone oxidoreductase subunit H.